Reading from the N-terminus, the 496-residue chain is Cruciferin BnC2 (496 aa).

Positions 1–23 are cleaved as a signal peptide; the sequence is MARLSSLLYFSITVLIFLHGSTA. Cystine bridges form between cysteine 30/cysteine 63 and cysteine 106/cysteine 313. 2 consecutive Cupin type-1 domains span residues 35–269 and 319–468; these read LNAL…RTAQ and DNLD…EEAR. Threonine 109 is modified (phosphothreonine). The segment at 114 to 170 is disordered; the sequence is SVFQPGSGSPFGEGQGQGQQGQGQGQGQGQGKGQQGQGKGQQGQSQGQQGQGQGFRD. A compositionally biased stretch (gly residues) spans 122–154; it reads SPFGEGQGQGQQGQGQGQGQGQGKGQQGQGKGQ. Tyrosine 336 is modified (phosphotyrosine). Position 338 is a phosphoserine (serine 338). Threonine 432 bears the Phosphothreonine mark.

The protein belongs to the 11S seed storage protein (globulins) family. Hexamer; each subunit is composed of an acidic and a basic chain derived from a single precursor and linked by a disulfide bond.

In terms of biological role, this is a seed storage protein. The protein is Cruciferin BnC2 (BnC2) of Brassica napus (Rape).